A 295-amino-acid chain; its full sequence is Elongation factor Ts (295 aa).

The interval 79-82 (TDFV) is involved in Mg(2+) ion dislocation from EF-Tu.

Belongs to the EF-Ts family.

The protein resides in the cytoplasm. Functionally, associates with the EF-Tu.GDP complex and induces the exchange of GDP to GTP. It remains bound to the aminoacyl-tRNA.EF-Tu.GTP complex up to the GTP hydrolysis stage on the ribosome. The sequence is that of Elongation factor Ts from Mycoplasma capricolum subsp. capricolum (strain California kid / ATCC 27343 / NCTC 10154).